The following is a 435-amino-acid chain: Hydrogenobyrinate a,c-diamide synthase (435 aa).

Residues 247-435 form the GATase cobBQ-type domain; sequence RIALARDAAF…TGSFFHLIAG (189 aa). The active-site Nucleophile is the Cys-329.

It belongs to the CobB/CbiA family. The cofactor is Mg(2+).

The catalysed reaction is hydrogenobyrinate + 2 L-glutamine + 2 ATP + 2 H2O = hydrogenobyrinate a,c-diamide + 2 L-glutamate + 2 ADP + 2 phosphate + 2 H(+). It participates in cofactor biosynthesis; adenosylcobalamin biosynthesis; cob(II)yrinate a,c-diamide from precorrin-2 (aerobic route): step 9/10. Catalyzes the ATP-dependent amidation of the two carboxylate groups at positions a and c of hydrogenobyrinate, using either L-glutamine or ammonia as the nitrogen source. The chain is Hydrogenobyrinate a,c-diamide synthase from Rhodobacter capsulatus (strain ATCC BAA-309 / NBRC 16581 / SB1003).